A 1071-amino-acid polypeptide reads, in one-letter code: DNA-directed RNA polymerase subunit beta (1071 aa).

It belongs to the RNA polymerase beta chain family. In plastids the minimal PEP RNA polymerase catalytic core is composed of four subunits: alpha, beta, beta', and beta''. When a (nuclear-encoded) sigma factor is associated with the core the holoenzyme is formed, which can initiate transcription.

Its subcellular location is the plastid. It is found in the chloroplast. It catalyses the reaction RNA(n) + a ribonucleoside 5'-triphosphate = RNA(n+1) + diphosphate. DNA-dependent RNA polymerase catalyzes the transcription of DNA into RNA using the four ribonucleoside triphosphates as substrates. The chain is DNA-directed RNA polymerase subunit beta from Acorus calamus (Sweet flag).